The following is a 2168-amino-acid chain: Bromodomain adjacent to zinc finger domain protein 2B (2168 aa).

8 disordered regions span residues 1–29, 140–348, 409–428, 459–479, 528–698, 719–740, 841–872, and 1021–1043; these read MESG…ASVV, FAPP…KQPQ, LKAG…SELR, SNPK…ENNH, STPF…LHIA, GTSS…RRVT, MEGR…PPNV, and RKKA…LNKE. A compositionally biased stretch (low complexity) spans 8–29; sequence PSSAASSTTPTSSSTPSVASVV. 2 stretches are compositionally biased toward polar residues: residues 146 to 163 and 171 to 193; these read NHDS…SNRN and GSIN…STTA. 2 stretches are compositionally biased toward low complexity: residues 194–204 and 240–263; these read SSSMGQTKSTS and ESSS…ISSS. Residues 264-291 show a composition bias toward acidic residues; the sequence is DSDDLEEDEEEEDQSIEESEDDDSDSES. Over residues 307–325 the composition is skewed to basic and acidic residues; that stretch reads SDPKADGQKATEKAQEKRI. A compositionally biased stretch (low complexity) spans 335–348; that stretch reads SQTHSFQSQQKQPQ. 2 stretches are compositionally biased toward polar residues: residues 461 to 479 and 528 to 551; these read PKAT…ENNH and STPF…QTPV. The segment covering 592 to 605 has biased composition (basic and acidic residues); it reads RGTDSDIPSSKDSE. Positions 606–663 are enriched in acidic residues; sequence DSNEDEEEDDEEEDEEDDEDDESDDSQSESDSNSESDTEGSEEEDDDDKDQDESDSDT. Over residues 670 to 693 the composition is skewed to polar residues; the sequence is MKLNKTTSSVKSPSMSLTGHSTPR. Over residues 720–732 the composition is skewed to low complexity; sequence TSSSTLTSSPHSG. In terms of domain architecture, MBD spans 739–810; sequence VTDERELRIP…DNFSFSAKIR (72 aa). A compositionally biased stretch (basic and acidic residues) spans 841–861; the sequence is MEGRRGRPPNPDRQRAREESR. The stretch at 883–1061 forms a coiled coil; the sequence is AKLLRKLQAQ…ELEMAKELKK (179 aa). The DDT domain maps to 1087 to 1152; sequence GSTFSDCLMV…LSAAVCDPGL (66 aa). The tract at residues 1265–1341 is disordered; it reads KRDTSGGIDL…CEDEDEGDQA (77 aa). Residues 1297 to 1321 are compositionally biased toward acidic residues; the sequence is SDYDDDDDDDSDDQGDEDDEDEEDK. Residues 1322 to 1331 show a composition bias toward basic and acidic residues; sequence EDKKGKKTDI. Residues 1334 to 1375 are a coiled coil; it reads DEDEGDQAASVEELEKQIEKLSKQQSQYRRKLFDASHSLRSV. Residue lysine 1425 forms a Glycyl lysine isopeptide (Lys-Gly) (interchain with G-Cter in SUMO2) linkage. Residue lysine 1462 is modified to N6-acetyllysine. 2 positions are modified to phosphoserine: serine 1465 and serine 1467. Polar residues predominate over residues 1503–1533; that stretch reads SGKHSLGSVQSTATQSNVEKADSNNLFNTGS. Disordered stretches follow at residues 1503–1542, 1582–1607, and 1670–1694; these read SGKH…FYSP, SLVT…SSAQ, and TSNV…AQPA. The segment covering 1588 to 1600 has biased composition (pro residues); it reads SQPPSKSPSPTPA. Positions 1670–1692 are enriched in polar residues; that stretch reads TSNVASSKSESPVPQNEKATSAQ. A Phosphoserine modification is found at serine 1680. A PHD-type zinc finger spans residues 1931–1981; it reads KVYCQICRKGDNEELLLLCDGCDKGCHTYCHRPKITTIPDGDWFCPACIAK. Residues 1998–2040 form a disordered region; it reads KTNESKKGKKVTLTGDTEDEDSASTSSSLKRGNKDLKKRKMEE. Phosphothreonine is present on threonine 2014. Serine 2019 bears the Phosphoserine mark. A compositionally biased stretch (basic and acidic residues) spans 2029–2040; it reads GNKDLKKRKMEE. Residues 2060–2164 form the Bromo domain; sequence RDDSKDLALC…KYFEKKWTDT (105 aa).

It belongs to the WAL family. In terms of assembly, component of the BRF-1 ISWI chromatin remodeling complex, at least composed of SMARCA1 and BAZ2B, which regulates the spacing of histone octamers on the DNA template to facilitate access to DNA. Within the BRF-1 ISWI chromatin remodeling complex interacts with SMARCA1; the interaction is direct. Component of the BRF-5 ISWI chromatin remodeling complex, at least composed of SMARCA5/SNF2H and BAZ2B, which regulates the spacing of histone octamers on the DNA template to facilitate access to DNA. Within the BRF-5 ISWI chromatin remodeling complex interacts with SMARCA5/SNF2H; the interaction is direct. Interacts with acetylated lysine residues on histone H1.4, H2A, H2B, H3 and H4 (in vitro). Interacts with EHMT1. Expressed at varying levels in several tissues, whereas a smaller transcript was expressed specifically in testis.

Its subcellular location is the nucleus. Its function is as follows. Regulatory subunit of the ATP-dependent BRF-1 and BRF-5 ISWI chromatin remodeling complexes, which form ordered nucleosome arrays on chromatin and facilitate access to DNA during DNA-templated processes such as DNA replication, transcription, and repair. Both complexes regulate the spacing of nucleosomes along the chromatin and have the ability to slide mononucleosomes to the center of a DNA template. The BRF-1 ISWI chromatin remodeling complex has a lower ATP hydrolysis rate than the BRF-5 ISWI chromatin remodeling complex. Chromatin reader protein, which may play a role in transcriptional regulation via interaction with ISWI. Involved in positively modulating the rate of age-related behavioral deterioration. Represses the expression of mitochondrial function-related genes, perhaps by occupying their promoter regions, working in concert with histone methyltransferase EHMT1. This is Bromodomain adjacent to zinc finger domain protein 2B (BAZ2B) from Homo sapiens (Human).